We begin with the raw amino-acid sequence, 264 residues long: uncharacterized protein (264 aa).

An N-terminal signal peptide occupies residues 1–26 (MMKKLFHSTLIVLLFFSFFGVQPIHA).

This is an uncharacterized protein from Bacillus subtilis (strain 168).